The sequence spans 231 residues: Large ribosomal subunit protein uL1 (231 aa).

This sequence belongs to the universal ribosomal protein uL1 family. As to quaternary structure, part of the 50S ribosomal subunit.

In terms of biological role, binds directly to 23S rRNA. The L1 stalk is quite mobile in the ribosome, and is involved in E site tRNA release. Protein L1 is also a translational repressor protein, it controls the translation of the L11 operon by binding to its mRNA. The sequence is that of Large ribosomal subunit protein uL1 from Halalkalibacterium halodurans (strain ATCC BAA-125 / DSM 18197 / FERM 7344 / JCM 9153 / C-125) (Bacillus halodurans).